A 141-amino-acid chain; its full sequence is Large ribosomal subunit protein uL11 (141 aa).

Belongs to the universal ribosomal protein uL11 family. Part of the ribosomal stalk of the 50S ribosomal subunit. Interacts with L10 and the large rRNA to form the base of the stalk. L10 forms an elongated spine to which L12 dimers bind in a sequential fashion forming a multimeric L10(L12)X complex. In terms of processing, one or more lysine residues are methylated.

Forms part of the ribosomal stalk which helps the ribosome interact with GTP-bound translation factors. The sequence is that of Large ribosomal subunit protein uL11 from Thermomicrobium roseum (strain ATCC 27502 / DSM 5159 / P-2).